Consider the following 359-residue polypeptide: 3-isopropylmalate dehydrogenase (359 aa).

4 residues coordinate substrate: Arg-96, Arg-106, Arg-134, and Asp-223. Mg(2+) contacts are provided by Asp-223, Asp-247, and Asp-251. 281–293 (GSAPDIAGQGIAN) contributes to the NAD(+) binding site.

Belongs to the isocitrate and isopropylmalate dehydrogenases family. LeuB type 1 subfamily. In terms of assembly, homodimer. The cofactor is Mg(2+). Mn(2+) serves as cofactor.

It localises to the cytoplasm. The catalysed reaction is (2R,3S)-3-isopropylmalate + NAD(+) = 4-methyl-2-oxopentanoate + CO2 + NADH. Its pathway is amino-acid biosynthesis; L-leucine biosynthesis; L-leucine from 3-methyl-2-oxobutanoate: step 3/4. Functionally, catalyzes the oxidation of 3-carboxy-2-hydroxy-4-methylpentanoate (3-isopropylmalate) to 3-carboxy-4-methyl-2-oxopentanoate. The product decarboxylates to 4-methyl-2 oxopentanoate. The sequence is that of 3-isopropylmalate dehydrogenase from Chromohalobacter salexigens (strain ATCC BAA-138 / DSM 3043 / CIP 106854 / NCIMB 13768 / 1H11).